Reading from the N-terminus, the 403-residue chain is Chorismate synthase (403 aa).

R40 and R46 together coordinate NADP(+). FMN contacts are provided by residues 140–142 (RSS), 261–262 (QA), G305, 320–324 (KPIST), and R346.

This sequence belongs to the chorismate synthase family. In terms of assembly, homotetramer. FMNH2 serves as cofactor.

It catalyses the reaction 5-O-(1-carboxyvinyl)-3-phosphoshikimate = chorismate + phosphate. The protein operates within metabolic intermediate biosynthesis; chorismate biosynthesis; chorismate from D-erythrose 4-phosphate and phosphoenolpyruvate: step 7/7. In terms of biological role, catalyzes the anti-1,4-elimination of the C-3 phosphate and the C-6 proR hydrogen from 5-enolpyruvylshikimate-3-phosphate (EPSP) to yield chorismate, which is the branch point compound that serves as the starting substrate for the three terminal pathways of aromatic amino acid biosynthesis. This reaction introduces a second double bond into the aromatic ring system. This chain is Chorismate synthase, found in Corynebacterium diphtheriae (strain ATCC 700971 / NCTC 13129 / Biotype gravis).